Consider the following 1024-residue polypeptide: Eukaryotic translation initiation factor 3 subunit A (1024 aa).

Positions valine 331–phenylalanine 508 constitute a PCI domain. Coiled-coil stretches lie at residues alanine 575–alanine 717 and lysine 777–arginine 889. Basic and acidic residues-rich tracts occupy residues lysine 797–alanine 866 and aspartate 873–arginine 886. 2 disordered regions span residues lysine 797–arginine 973 and alanine 1001–alanine 1024. Low complexity-rich tracts occupy residues alanine 890–alanine 906 and lysine 946–alanine 971.

It belongs to the eIF-3 subunit A family. As to quaternary structure, component of the eukaryotic translation initiation factor 3 (eIF-3) complex.

It localises to the cytoplasm. Its function is as follows. RNA-binding component of the eukaryotic translation initiation factor 3 (eIF-3) complex, which is involved in protein synthesis of a specialized repertoire of mRNAs and, together with other initiation factors, stimulates binding of mRNA and methionyl-tRNAi to the 40S ribosome. The eIF-3 complex specifically targets and initiates translation of a subset of mRNAs involved in cell proliferation. This Mycosarcoma maydis (Corn smut fungus) protein is Eukaryotic translation initiation factor 3 subunit A.